We begin with the raw amino-acid sequence, 126 residues long: Histone H2B 8 (126 aa).

Low complexity predominate over residues 1-12; it reads MPEPAKSAPAPK. The interval 1–35 is disordered; the sequence is MPEPAKSAPAPKKGSKKAVTKTQKKGDKKRRKTRK. N6-acetyllysine occurs at positions 6 and 13. Residues 13–34 show a composition bias toward basic residues; sequence KGSKKAVTKTQKKGDKKRRKTR. The residue at position 15 (Ser15) is a Phosphoserine. An N6-acetyllysine mark is found at Lys16 and Lys21. The O-linked (GlcNAc) serine glycan is linked to Ser113. A Glycyl lysine isopeptide (Lys-Gly) (interchain with G-Cter in ubiquitin) cross-link involves residue Lys121.

It belongs to the histone H2B family. The nucleosome is a histone octamer containing two molecules each of H2A, H2B, H3 and H4 assembled in one H3-H4 heterotetramer and two H2A-H2B heterodimers. The octamer wraps approximately 147 bp of DNA. In terms of processing, monoubiquitination of Lys-121 by the BRE1 gives a specific tag for epigenetic transcriptional activation and is also prerequisite for histone H3 'Lys-4' and 'Lys-79' methylation. Phosphorylated on Ser-15 during apoptosis; which facilitates apoptotic chromatin condensation. Post-translationally, glcNAcylation at Ser-113 promotes monoubiquitination of Lys-121. It fluctuates in response to extracellular glucose, and associates with transcribed genes.

The protein resides in the nucleus. It is found in the chromosome. Functionally, core component of nucleosome. Nucleosomes wrap and compact DNA into chromatin, limiting DNA accessibility to the cellular machineries which require DNA as a template. Histones thereby play a central role in transcription regulation, DNA repair, DNA replication and chromosomal stability. DNA accessibility is regulated via a complex set of post-translational modifications of histones, also called histone code, and nucleosome remodeling. The sequence is that of Histone H2B 8 (H2B-VIII) from Gallus gallus (Chicken).